Consider the following 125-residue polypeptide: Small ribosomal subunit protein uS12 (125 aa).

The segment at 9–31 is disordered; sequence RQGREVEKIKSKSPAMENSPQRR. A 3-methylthioaspartic acid modification is found at aspartate 89.

The protein belongs to the universal ribosomal protein uS12 family. In terms of assembly, part of the 30S ribosomal subunit. Contacts proteins S8 and S17. May interact with IF1 in the 30S initiation complex.

In terms of biological role, with S4 and S5 plays an important role in translational accuracy. Functionally, interacts with and stabilizes bases of the 16S rRNA that are involved in tRNA selection in the A site and with the mRNA backbone. Located at the interface of the 30S and 50S subunits, it traverses the body of the 30S subunit contacting proteins on the other side and probably holding the rRNA structure together. The combined cluster of proteins S8, S12 and S17 appears to hold together the shoulder and platform of the 30S subunit. The polypeptide is Small ribosomal subunit protein uS12 (Verminephrobacter eiseniae (strain EF01-2)).